The following is a 387-amino-acid chain: Formate-dependent phosphoribosylglycinamide formyltransferase (387 aa).

Residues 21–22 and Glu81 contribute to the N(1)-(5-phospho-beta-D-ribosyl)glycinamide site; that span reads EL. ATP contacts are provided by residues Arg113, Lys154, 159 to 164, 193 to 196, and Glu201; these read SSGHGQ and EEFI. The 189-residue stretch at 118–306 folds into the ATP-grasp domain; that stretch reads TFAAEEVGVK…EFALHLRAVL (189 aa). Glu265 and Glu277 together coordinate Mg(2+). N(1)-(5-phospho-beta-D-ribosyl)glycinamide is bound by residues Asp284, Lys352, and 359–360; that span reads RR.

This sequence belongs to the PurK/PurT family. As to quaternary structure, homodimer.

It carries out the reaction N(1)-(5-phospho-beta-D-ribosyl)glycinamide + formate + ATP = N(2)-formyl-N(1)-(5-phospho-beta-D-ribosyl)glycinamide + ADP + phosphate + H(+). Its pathway is purine metabolism; IMP biosynthesis via de novo pathway; N(2)-formyl-N(1)-(5-phospho-D-ribosyl)glycinamide from N(1)-(5-phospho-D-ribosyl)glycinamide (formate route): step 1/1. In terms of biological role, involved in the de novo purine biosynthesis. Catalyzes the transfer of formate to 5-phospho-ribosyl-glycinamide (GAR), producing 5-phospho-ribosyl-N-formylglycinamide (FGAR). Formate is provided by PurU via hydrolysis of 10-formyl-tetrahydrofolate. The sequence is that of Formate-dependent phosphoribosylglycinamide formyltransferase from Wolinella succinogenes (strain ATCC 29543 / DSM 1740 / CCUG 13145 / JCM 31913 / LMG 7466 / NCTC 11488 / FDC 602W) (Vibrio succinogenes).